Here is a 254-residue protein sequence, read N- to C-terminus: Pyruvate dehydrogenase complex repressor (254 aa).

Residues 9–77 (PKLSDVIEQQ…QGGGTFVQSS (69 aa)) form the HTH gntR-type domain. The H-T-H motif DNA-binding region spans 37-56 (ERELAKQFDVSRPSLREAIQ).

In terms of biological role, transcriptional repressor for the pyruvate dehydrogenase complex genes aceEF and lpd. The sequence is that of Pyruvate dehydrogenase complex repressor (pdhR) from Salmonella typhi.